The following is a 404-amino-acid chain: tRNA pseudouridine synthase D (404 aa).

Aspartate 79 functions as the Nucleophile in the catalytic mechanism. Positions 154–364 (GVPNRFGEQR…MEGERRPLRV (211 aa)) constitute a TRUD domain.

The protein belongs to the pseudouridine synthase TruD family.

It catalyses the reaction uridine(13) in tRNA = pseudouridine(13) in tRNA. Its function is as follows. Responsible for synthesis of pseudouridine from uracil-13 in transfer RNAs. This is tRNA pseudouridine synthase D from Geobacter metallireducens (strain ATCC 53774 / DSM 7210 / GS-15).